The sequence spans 364 residues: Dihydroorotate dehydrogenase (quinone) (364 aa).

FMN is bound by residues 62–66 and T86; that span reads AGFDK. K66 contributes to the substrate binding site. Residue 111–115 participates in substrate binding; it reads NRMGF. FMN is bound by residues N142 and N175. N175 provides a ligand contact to substrate. Catalysis depends on S178, which acts as the Nucleophile. N180 serves as a coordination point for substrate. FMN-binding residues include K216 and T244. 245–246 contributes to the substrate binding site; that stretch reads NT. FMN is bound by residues G267, G296, and 317–318; that span reads YT.

The protein belongs to the dihydroorotate dehydrogenase family. Type 2 subfamily. As to quaternary structure, monomer. The cofactor is FMN.

Its subcellular location is the cell membrane. The enzyme catalyses (S)-dihydroorotate + a quinone = orotate + a quinol. It functions in the pathway pyrimidine metabolism; UMP biosynthesis via de novo pathway; orotate from (S)-dihydroorotate (quinone route): step 1/1. Functionally, catalyzes the conversion of dihydroorotate to orotate with quinone as electron acceptor. This chain is Dihydroorotate dehydrogenase (quinone), found in Anaeromyxobacter dehalogenans (strain 2CP-C).